Here is a 497-residue protein sequence, read N- to C-terminus: tRNA-2-methylthio-N(6)-dimethylallyladenosine synthase (497 aa).

The disordered stretch occupies residues 1–50; the sequence is MTGTSNIPTHGKEHKDAPALLPLPAPNPHHTHAAHPGNPSHDRPPSRGKL. The 118-residue stretch at 48 to 165 folds into the MTTase N-terminal domain; that stretch reads GKLFIKTHGC…LPDMIRARRE (118 aa). 6 residues coordinate [4Fe-4S] cluster: cysteine 57, cysteine 94, cysteine 128, cysteine 202, cysteine 206, and cysteine 209. The 243-residue stretch at 188–430 folds into the Radical SAM core domain; sequence RAEGPSAFVS…QKHINTYAAD (243 aa). The region spanning 433-496 is the TRAM domain; that stretch reads KRMIGTVQTV…SNSLRGRVHT (64 aa).

It belongs to the methylthiotransferase family. MiaB subfamily. Monomer. Requires [4Fe-4S] cluster as cofactor.

The protein localises to the cytoplasm. It catalyses the reaction N(6)-dimethylallyladenosine(37) in tRNA + (sulfur carrier)-SH + AH2 + 2 S-adenosyl-L-methionine = 2-methylsulfanyl-N(6)-dimethylallyladenosine(37) in tRNA + (sulfur carrier)-H + 5'-deoxyadenosine + L-methionine + A + S-adenosyl-L-homocysteine + 2 H(+). Its function is as follows. Catalyzes the methylthiolation of N6-(dimethylallyl)adenosine (i(6)A), leading to the formation of 2-methylthio-N6-(dimethylallyl)adenosine (ms(2)i(6)A) at position 37 in tRNAs that read codons beginning with uridine. The chain is tRNA-2-methylthio-N(6)-dimethylallyladenosine synthase from Xylella fastidiosa (strain 9a5c).